We begin with the raw amino-acid sequence, 256 residues long: D-aminoacyl-tRNA deacylase (256 aa).

It belongs to the DtdA deacylase family. As to quaternary structure, monomer. Zn(2+) serves as cofactor.

It catalyses the reaction a D-aminoacyl-tRNA + H2O = a tRNA + a D-alpha-amino acid + H(+). The enzyme catalyses glycyl-tRNA(Ala) + H2O = tRNA(Ala) + glycine + H(+). Functionally, D-aminoacyl-tRNA deacylase with broad substrate specificity. By recycling D-aminoacyl-tRNA to D-amino acids and free tRNA molecules, this enzyme counteracts the toxicity associated with the formation of D-aminoacyl-tRNA entities in vivo. This is D-aminoacyl-tRNA deacylase from Thermoplasma volcanium (strain ATCC 51530 / DSM 4299 / JCM 9571 / NBRC 15438 / GSS1).